Reading from the N-terminus, the 205-residue chain is Peptidyl-tRNA hydrolase (205 aa).

Y17 contributes to the tRNA binding site. Catalysis depends on H22, which acts as the Proton acceptor. TRNA-binding residues include Y73 and N75.

This sequence belongs to the PTH family. As to quaternary structure, monomer.

It is found in the cytoplasm. It carries out the reaction an N-acyl-L-alpha-aminoacyl-tRNA + H2O = an N-acyl-L-amino acid + a tRNA + H(+). Its function is as follows. Hydrolyzes ribosome-free peptidyl-tRNAs (with 1 or more amino acids incorporated), which drop off the ribosome during protein synthesis, or as a result of ribosome stalling. Functionally, catalyzes the release of premature peptidyl moieties from peptidyl-tRNA molecules trapped in stalled 50S ribosomal subunits, and thus maintains levels of free tRNAs and 50S ribosomes. This chain is Peptidyl-tRNA hydrolase, found in Maridesulfovibrio salexigens (strain ATCC 14822 / DSM 2638 / NCIMB 8403 / VKM B-1763) (Desulfovibrio salexigens).